The chain runs to 37 residues: TVIDVKCTSPKQCVPACKAAMGTVRAKCMNGKCKCYI.

Intrachain disulfides connect Cys7/Cys28, Cys13/Cys33, and Cys17/Cys35.

As to expression, expressed by the venom gland.

The protein localises to the secreted. Its function is as follows. Inhibitor of voltage-gated potassium channels. The chain is Potassium channel toxin alpha-KTx 2.19 from Rhopalurus junceus (Caribbean blue scorpion).